We begin with the raw amino-acid sequence, 132 residues long: Fatty acid-binding protein, intestinal (132 aa).

At Ala2 the chain carries N-acetylalanine. Residues Trp83 and Arg107 each coordinate hexadecanoate. The tetradecanoate site is built by Trp83 and Arg107.

Belongs to the calycin superfamily. Fatty-acid binding protein (FABP) family.

The protein resides in the cytoplasm. FABPs are thought to play a role in the intracellular transport of long-chain fatty acids and their acyl-CoA esters. FABP2 is probably involved in triglyceride-rich lipoprotein synthesis. Binds saturated long-chain fatty acids with a high affinity, but binds with a lower affinity to unsaturated long-chain fatty acids. FABP2 may also help maintain energy homeostasis by functioning as a lipid sensor. The protein is Fatty acid-binding protein, intestinal (FABP2) of Sus scrofa (Pig).